Here is a 104-residue protein sequence, read N- to C-terminus: N(4)-acetylcytidine amidohydrolase (104 aa).

Residues 6 to 96 (ITFYQRFEAD…TIYPNEHESW (91 aa)) form the ASCH domain. The active-site Proton acceptor is Lys21. Thr24 (nucleophile) is an active-site residue. Catalysis depends on Glu74, which acts as the Proton donor.

Belongs to the N(4)-acetylcytidine amidohydrolase family.

It carries out the reaction N(4)-acetylcytidine + H2O = cytidine + acetate + H(+). The enzyme catalyses N(4)-acetyl-2'-deoxycytidine + H2O = 2'-deoxycytidine + acetate + H(+). The catalysed reaction is N(4)-acetylcytosine + H2O = cytosine + acetate + H(+). Functionally, catalyzes the hydrolysis of N(4)-acetylcytidine (ac4C). In Haemophilus influenzae (strain 86-028NP), this protein is N(4)-acetylcytidine amidohydrolase.